The following is a 195-amino-acid chain: Rac-like GTP-binding protein ARAC4 (195 aa).

GTP-binding positions include 12-19, 30-37, 59-63, and 117-120; these read GDGAVGKT, FPTDYVPT, DTAGQ, and TKLD. An Effector region motif is present at residues 34-42; that stretch reads YVPTVFDNF. Cysteine methyl ester is present on C192. The S-geranylgeranyl cysteine moiety is linked to residue C192. A propeptide spans 193–195 (removed in mature form); sequence AFL.

The protein belongs to the small GTPase superfamily. Rho family. In terms of assembly, interacts with SPK1, ICR1, ICR5 and PIR. Ubiquitous.

It is found in the cytoplasm. It localises to the cell membrane. In terms of biological role, inactive GDP-bound Rho GTPases reside in the cytosol, are found in a complex with Rho GDP-dissociation inhibitors (Rho GDIs), and are released from the GDI protein in order to translocate to membranes upon activation. Involved in cell polarity control during the actin-dependent tip growth of root hairs, thus regulating root hair length and root hair initiation. Contributes, in a SPK1-dependent manner, to the prevention of cortical microtubules organization into parallel arrays oriented perpendicular to the axis of cell elongation to limit anisotropic cell growth during petal development. May regulate a WAVE complex that activates the Arp2/3 complex. The protein is Rac-like GTP-binding protein ARAC4 of Arabidopsis thaliana (Mouse-ear cress).